We begin with the raw amino-acid sequence, 232 residues long: Ribonuclease 3 (232 aa).

In terms of domain architecture, RNase III spans 5–134 (QTVLKNHFAI…FLGALLLDKD (130 aa)). Residue glutamate 47 coordinates Mg(2+). Aspartate 51 is a catalytic residue. Mg(2+) is bound by residues aspartate 120 and glutamate 123. Glutamate 123 is an active-site residue. A DRBM domain is found at 160-229 (DYKTHLQELL…AKNAVEKGLD (70 aa)).

This sequence belongs to the ribonuclease III family. Homodimer. It depends on Mg(2+) as a cofactor.

The protein resides in the cytoplasm. It carries out the reaction Endonucleolytic cleavage to 5'-phosphomonoester.. Digests double-stranded RNA. Involved in the processing of primary rRNA transcript to yield the immediate precursors to the large and small rRNAs (23S and 16S). Processes some mRNAs, and tRNAs when they are encoded in the rRNA operon. Processes pre-crRNA and tracrRNA of type II CRISPR loci if present in the organism. The chain is Ribonuclease 3 from Streptococcus pneumoniae (strain P1031).